Here is a 389-residue protein sequence, read N- to C-terminus: Succinate--CoA ligase [ADP-forming] subunit beta (389 aa).

Residues 9-236 (RDMFEAHGVP…KDAADPLEAK (228 aa)) form the ATP-grasp domain. ATP is bound by residues Lys45, 52–54 (GRG), Ala94, and Glu99. Mg(2+) is bound by residues Asn191 and Asp205. Substrate is bound by residues Asn256 and 318–320 (GIT).

The protein belongs to the succinate/malate CoA ligase beta subunit family. In terms of assembly, heterotetramer of two alpha and two beta subunits. Requires Mg(2+) as cofactor.

The catalysed reaction is succinate + ATP + CoA = succinyl-CoA + ADP + phosphate. It catalyses the reaction GTP + succinate + CoA = succinyl-CoA + GDP + phosphate. It functions in the pathway carbohydrate metabolism; tricarboxylic acid cycle; succinate from succinyl-CoA (ligase route): step 1/1. Succinyl-CoA synthetase functions in the citric acid cycle (TCA), coupling the hydrolysis of succinyl-CoA to the synthesis of either ATP or GTP and thus represents the only step of substrate-level phosphorylation in the TCA. The beta subunit provides nucleotide specificity of the enzyme and binds the substrate succinate, while the binding sites for coenzyme A and phosphate are found in the alpha subunit. The protein is Succinate--CoA ligase [ADP-forming] subunit beta of Pseudarthrobacter chlorophenolicus (strain ATCC 700700 / DSM 12829 / CIP 107037 / JCM 12360 / KCTC 9906 / NCIMB 13794 / A6) (Arthrobacter chlorophenolicus).